The sequence spans 485 residues: Glycogen synthase (485 aa).

K20 is an ADP-alpha-D-glucose binding site.

Belongs to the glycosyltransferase 1 family. Bacterial/plant glycogen synthase subfamily.

It carries out the reaction [(1-&gt;4)-alpha-D-glucosyl](n) + ADP-alpha-D-glucose = [(1-&gt;4)-alpha-D-glucosyl](n+1) + ADP + H(+). Its pathway is glycan biosynthesis; glycogen biosynthesis. Functionally, synthesizes alpha-1,4-glucan chains using ADP-glucose. The protein is Glycogen synthase of Vibrio vulnificus (strain YJ016).